The sequence spans 94 residues: Small ribosomal subunit protein bS18 (94 aa).

It belongs to the bacterial ribosomal protein bS18 family. In terms of assembly, part of the 30S ribosomal subunit. Forms a tight heterodimer with protein bS6.

Binds as a heterodimer with protein bS6 to the central domain of the 16S rRNA, where it helps stabilize the platform of the 30S subunit. The polypeptide is Small ribosomal subunit protein bS18 (Albidiferax ferrireducens (strain ATCC BAA-621 / DSM 15236 / T118) (Rhodoferax ferrireducens)).